The chain runs to 351 residues: F-box protein At1g70590 (351 aa).

The tract at residues 1-60 is disordered; it reads MKQRTWPCRSEGSRFSSLSFLKPHDKDKRSRISSINKATAKSTTSSRSSSSSSSSRPPSN. Positions 32-41 are enriched in polar residues; it reads ISSINKATAK. The span at 42 to 59 shows a compositional bias: low complexity; that stretch reads STTSSRSSSSSSSSRPPS. In terms of domain architecture, F-box spans 62–111; the sequence is FGDFSMLPYDILMKIAAPFSHPNLQAASLVCKSWRDALKPLRESMLLIRW. One copy of the Sel1-like repeat lies at 105–141; that stretch reads SMLLIRWGKKYKHGRGGVRANLDKALDSFLKGAMRGS. Residues 142 to 175 form a TPR repeat; it reads TLAMVDAGLVYWERGEKEKAVNLYRRASELGDAV.

This is F-box protein At1g70590 from Arabidopsis thaliana (Mouse-ear cress).